An 849-amino-acid polypeptide reads, in one-letter code: MTKEKLSPGMQQYLDIKKDYPDAFLLFRMGDFYELFYDDAIKAAQILEISLTSRNKNADNPIPMAGVPYHSAQQYIDVLIDLGYKVAIAEQMEDPKKAVGVVKREVVQVITPGTVVDSTKPDSANNFLVSLDTDGSQFGLSYMDLSTGEFYATTLADLPAVRSEVLNLKTRELVIGFELSENEDQLFRKQMNLLLSFEKTVYDDVHLLDDQLKAIELAAAGKLLQYVHNTQKRELSHLQKLVHYEIKDYLQMAYATKSSLDLLENARSGKKHGSLYWLLDETKTAMGTRLLRTWIDRPLVSSSLISKRQDIIQTFLDHFFERSDLSDSLKGVYDIERLASRVSFGKANPKDLLQLGQTLSQVPVIKTILESFASSSLESLINQIDTLPELEALIRSAIDSNAPITITEGGMIREGFDETLDKYRTVMREGTSWIADIETKERQKSGISTLKIDYNKKDGYYFHVTNSNLSLVPDYFFRKATLKNSERFGTAELAKIEGEMLEAREESANLEYDIFMRIRSQVESYIERLQNLAKSLATVDVLQSLAVVAENNHYVRPSFNHQQEISIENGRHAVVEKVMGSQEYIPNTINFDQKTSIQLITGPNMSGKSTYMRQLALTVIMAQLGSFVAADSADLPIFDAIFTRIGAADDLISGQSTFMVEMMEANHAIKAATPNSLILFDELGRGTATYDGMALAQAIIEYIHNKVGAKTLFATHYHELTDLSTRLTSLVNVHVATLEKDGEVTFLHKIADGPADKSYGIHVAKIAGLPKDLLNRADHILVDLEKMSAAVSVNLKNETKESQPVEEQLSLFAIDNNYEELIKKLKQLDLTNLTPRESMNALFDLKELL.

602 to 609 is an ATP binding site; it reads GPNMSGKS.

Belongs to the DNA mismatch repair MutS family.

This protein is involved in the repair of mismatches in DNA. It is possible that it carries out the mismatch recognition step. This protein has a weak ATPase activity. This chain is DNA mismatch repair protein MutS, found in Streptococcus mutans serotype c (strain ATCC 700610 / UA159).